The sequence spans 251 residues: Hydroxyacylglutathione hydrolase (251 aa).

Zn(2+) is bound by residues His53, His55, Asp57, His58, His110, Asp127, and His165.

It belongs to the metallo-beta-lactamase superfamily. Glyoxalase II family. Monomer. Requires Zn(2+) as cofactor.

It carries out the reaction an S-(2-hydroxyacyl)glutathione + H2O = a 2-hydroxy carboxylate + glutathione + H(+). It functions in the pathway secondary metabolite metabolism; methylglyoxal degradation; (R)-lactate from methylglyoxal: step 2/2. Thiolesterase that catalyzes the hydrolysis of S-D-lactoyl-glutathione to form glutathione and D-lactic acid. This Escherichia coli (strain SE11) protein is Hydroxyacylglutathione hydrolase.